Consider the following 232-residue polypeptide: Small ribosomal subunit protein uS3 (232 aa).

Residues 39–107 (VRQFLTSELK…PAQINIAEVR (69 aa)) form the KH type-2 domain. Residues 213 to 232 (AANAVEPKGDKPKKQRKGRK) are disordered.

This sequence belongs to the universal ribosomal protein uS3 family. Part of the 30S ribosomal subunit. Forms a tight complex with proteins S10 and S14.

Functionally, binds the lower part of the 30S subunit head. Binds mRNA in the 70S ribosome, positioning it for translation. This is Small ribosomal subunit protein uS3 from Vibrio parahaemolyticus serotype O3:K6 (strain RIMD 2210633).